Reading from the N-terminus, the 238-residue chain is Phosphoribosylaminoimidazole-succinocarboxamide synthase (238 aa).

This sequence belongs to the SAICAR synthetase family.

It catalyses the reaction 5-amino-1-(5-phospho-D-ribosyl)imidazole-4-carboxylate + L-aspartate + ATP = (2S)-2-[5-amino-1-(5-phospho-beta-D-ribosyl)imidazole-4-carboxamido]succinate + ADP + phosphate + 2 H(+). Its pathway is purine metabolism; IMP biosynthesis via de novo pathway; 5-amino-1-(5-phospho-D-ribosyl)imidazole-4-carboxamide from 5-amino-1-(5-phospho-D-ribosyl)imidazole-4-carboxylate: step 1/2. The protein is Phosphoribosylaminoimidazole-succinocarboxamide synthase of Marinomonas sp. (strain MWYL1).